Here is a 426-residue protein sequence, read N- to C-terminus: Serine--tRNA ligase (426 aa).

An L-serine-binding site is contributed by 233–235 (TAE). 264 to 266 (RSE) provides a ligand contact to ATP. Glu-287 provides a ligand contact to L-serine. 351–354 (EISS) is an ATP binding site. Position 387 (Ser-387) interacts with L-serine.

This sequence belongs to the class-II aminoacyl-tRNA synthetase family. Type-1 seryl-tRNA synthetase subfamily. In terms of assembly, homodimer. The tRNA molecule binds across the dimer.

The protein resides in the cytoplasm. The catalysed reaction is tRNA(Ser) + L-serine + ATP = L-seryl-tRNA(Ser) + AMP + diphosphate + H(+). The enzyme catalyses tRNA(Sec) + L-serine + ATP = L-seryl-tRNA(Sec) + AMP + diphosphate + H(+). It functions in the pathway aminoacyl-tRNA biosynthesis; selenocysteinyl-tRNA(Sec) biosynthesis; L-seryl-tRNA(Sec) from L-serine and tRNA(Sec): step 1/1. Catalyzes the attachment of serine to tRNA(Ser). Is also able to aminoacylate tRNA(Sec) with serine, to form the misacylated tRNA L-seryl-tRNA(Sec), which will be further converted into selenocysteinyl-tRNA(Sec). The chain is Serine--tRNA ligase from Pseudomonas putida (strain ATCC 47054 / DSM 6125 / CFBP 8728 / NCIMB 11950 / KT2440).